The primary structure comprises 181 residues: uncharacterized protein (181 aa).

Gly residues-rich tracts occupy residues 143 to 156 (RRGG…GPRG) and 170 to 181 (GPFGPGYRGPRF). The tract at residues 143–181 (RRGGRYGDFGGPRGPRGPRNDGPFGPFGPFGPGYRGPRF) is disordered.

In terms of assembly, has been detected in a cytochrome bc1-aa3 supercomplex; its deletion however leaves complex activity unaffected.

This is an uncharacterized protein from Corynebacterium glutamicum (strain ATCC 13032 / DSM 20300 / JCM 1318 / BCRC 11384 / CCUG 27702 / LMG 3730 / NBRC 12168 / NCIMB 10025 / NRRL B-2784 / 534).